Here is a 352-residue protein sequence, read N- to C-terminus: MTQISERFLVQAHLDAKQPRTLSPAEQARYRADIAAELKKQDAVLVAHYYCDPVIQALAEETGGCVADSLEMARFSNNHAASTVLVAGVRFMGETAKILNPEKRVFMPTLEATCSLDVGCPVDEFSAFCDQHPERTVVVYANTSAAVKARADWVVTSGCALEIVESLMDNGEKIIWAPDKHLGRYIQRETGADMLLWDGACIVHEEFKSKQLEDMKALYPEAAILVHPESPEAVIELADVVGSTSQMIAAAQRLPNKTFIVATDRGIFYKMQQLCPDKIFIEAPTAGNGAACRSCAHCPWMAMNTLERTLQCLREGSNEIFVDPALIPHAVRPLQRMLDFTQAARLRQAGNA.

Iminosuccinate contacts are provided by histidine 48 and serine 69. Cysteine 114 is a binding site for [4Fe-4S] cluster. Iminosuccinate contacts are provided by residues 140–142 and serine 157; that span reads YAN. Cysteine 201 is a [4Fe-4S] cluster binding site. Iminosuccinate is bound by residues 227–229 and threonine 244; that span reads HPE. Position 298 (cysteine 298) interacts with [4Fe-4S] cluster.

This sequence belongs to the quinolinate synthase family. Type 1 subfamily. [4Fe-4S] cluster is required as a cofactor.

The protein resides in the cytoplasm. The enzyme catalyses iminosuccinate + dihydroxyacetone phosphate = quinolinate + phosphate + 2 H2O + H(+). It functions in the pathway cofactor biosynthesis; NAD(+) biosynthesis; quinolinate from iminoaspartate: step 1/1. Functionally, catalyzes the condensation of iminoaspartate with dihydroxyacetone phosphate to form quinolinate. The protein is Quinolinate synthase of Pseudomonas syringae pv. syringae (strain B728a).